The following is an 891-amino-acid chain: Protein translocase subunit SecA (891 aa).

Residues Gln-83, 101-105, and Asp-489 contribute to the ATP site; that span reads GEGKT.

The protein belongs to the SecA family.

It localises to the plastid. The protein resides in the chloroplast stroma. The protein localises to the chloroplast thylakoid membrane. It carries out the reaction ATP + H2O + cellular proteinSide 1 = ADP + phosphate + cellular proteinSide 2.. Functionally, has a central role in coupling the hydrolysis of ATP to the transfer of proteins across the thylakoid membrane. This chain is Protein translocase subunit SecA, found in Diacronema lutheri (Unicellular marine alga).